Here is a 618-residue protein sequence, read N- to C-terminus: 1-deoxy-D-xylulose-5-phosphate synthase (618 aa).

Thiamine diphosphate is bound by residues histidine 76 and glycine 117–serine 119. Aspartate 148 is a binding site for Mg(2+). Thiamine diphosphate-binding positions include glycine 149–alanine 150, asparagine 177, tyrosine 284, and glutamate 364. Residue asparagine 177 coordinates Mg(2+).

It belongs to the transketolase family. DXPS subfamily. In terms of assembly, homodimer. Mg(2+) is required as a cofactor. Thiamine diphosphate serves as cofactor.

The enzyme catalyses D-glyceraldehyde 3-phosphate + pyruvate + H(+) = 1-deoxy-D-xylulose 5-phosphate + CO2. Its pathway is metabolic intermediate biosynthesis; 1-deoxy-D-xylulose 5-phosphate biosynthesis; 1-deoxy-D-xylulose 5-phosphate from D-glyceraldehyde 3-phosphate and pyruvate: step 1/1. Its function is as follows. Catalyzes the acyloin condensation reaction between C atoms 2 and 3 of pyruvate and glyceraldehyde 3-phosphate to yield 1-deoxy-D-xylulose-5-phosphate (DXP). The sequence is that of 1-deoxy-D-xylulose-5-phosphate synthase from Francisella philomiragia subsp. philomiragia (strain ATCC 25017 / CCUG 19701 / FSC 153 / O#319-036).